The chain runs to 251 residues: Hydroxyacylglutathione hydrolase (251 aa).

The Zn(2+) site is built by histidine 53, histidine 55, aspartate 57, histidine 58, histidine 110, aspartate 127, and histidine 165.

Belongs to the metallo-beta-lactamase superfamily. Glyoxalase II family. As to quaternary structure, monomer. It depends on Zn(2+) as a cofactor.

The catalysed reaction is an S-(2-hydroxyacyl)glutathione + H2O = a 2-hydroxy carboxylate + glutathione + H(+). Its pathway is secondary metabolite metabolism; methylglyoxal degradation; (R)-lactate from methylglyoxal: step 2/2. Thiolesterase that catalyzes the hydrolysis of S-D-lactoyl-glutathione to form glutathione and D-lactic acid. This chain is Hydroxyacylglutathione hydrolase, found in Klebsiella pneumoniae subsp. pneumoniae (strain ATCC 700721 / MGH 78578).